Here is a 221-residue protein sequence, read N- to C-terminus: Sugar transporter SWEET1 (221 aa).

Helical transmembrane passes span 3 to 23 (AGGV…LGMF), 43 to 63 (QFLP…YGVL), 68 to 88 (TLII…LAYL), 102 to 122 (ATLL…VPDL), 129 to 149 (LGLF…ADLA), 160 to 180 (LSFS…IYGF), and 186 to 206 (YITV…GLFC). One can recognise a MtN3/slv 1 domain in the interval 10–94 (FLSSACVLFT…LAYLHYSPQK (85 aa)). A MtN3/slv 2 domain is found at 127–212 (QQLGLFCSVF…GLFCKYPPEQ (86 aa)). The tract at residues 149 to 221 (AKIVQTKSTQ…QDRKYRLLQT (73 aa)) is mediates interaction with TRPV2.

It belongs to the SWEET sugar transporter family. As to quaternary structure, interacts with TRPV2; the interaction probably occurs intracellularly and depends on TRPV2 N-glycosylation. In terms of tissue distribution, expressed at high levels in lung, placenta, spleen and thymus, at intermediate levels in brain, heart, kidney and testis, and at low levels in bone marrow, liver and lymph node. Within the thymus expression is highest in non-lymphoid cells.

Its subcellular location is the golgi apparatus membrane. The protein localises to the cell membrane. In terms of biological role, mediates sugar transport across membranes. May regulate the expression of RAG1 a gene involved in V(D)J recombination. This is Sugar transporter SWEET1 (Slc50a1) from Mus musculus (Mouse).